Reading from the N-terminus, the 380-residue chain is Cytochrome b (380 aa).

A run of 4 helical transmembrane segments spans residues 34–54 (FGSL…FLAM), 78–99 (WLLR…YFHI), 114–134 (WNIG…GYVL), and 179–199 (FFTF…IHLL). Positions 84 and 98 each coordinate heme b. 2 residues coordinate heme b: H183 and H197. A ubiquinone is bound at residue H202. Transmembrane regions (helical) follow at residues 227 to 247 (YKDL…STFA), 289 to 309 (LGGV…PIIH), 321 to 341 (IAKT…WIGG), and 348 to 368 (FITI…LLIP).

Belongs to the cytochrome b family. The cytochrome bc1 complex contains 3 respiratory subunits (MT-CYB, CYC1 and UQCRFS1), 2 core proteins (UQCRC1 and UQCRC2) and probably 6 low-molecular weight proteins. Heme b serves as cofactor.

It localises to the mitochondrion inner membrane. Its function is as follows. Component of the ubiquinol-cytochrome c reductase complex (complex III or cytochrome b-c1 complex) that is part of the mitochondrial respiratory chain. The b-c1 complex mediates electron transfer from ubiquinol to cytochrome c. Contributes to the generation of a proton gradient across the mitochondrial membrane that is then used for ATP synthesis. The chain is Cytochrome b (mt-cyb) from Pelophylax nigromaculatus (Black-spotted frog).